We begin with the raw amino-acid sequence, 264 residues long: Chanoclavine-I dehydrogenase easD (264 aa).

The N-terminal stretch at 1–20 (MASVSSKIFAITGGASGIGA) is a signal peptide. NADP(+) contacts are provided by Ile-18, Asp-66, Arg-132, Tyr-169, Lys-173, and Thr-204. Tyr-169 acts as the Proton donor in catalysis. Lys-173 (lowers pKa of active site Tyr) is an active-site residue.

The protein belongs to the short-chain dehydrogenases/reductases (SDR) family. In terms of assembly, homotetramer.

It carries out the reaction chanoclavine-I + NAD(+) = chanoclavine-I aldehyde + NADH + H(+). The protein operates within alkaloid biosynthesis; ergot alkaloid biosynthesis. In terms of biological role, chanoclavine-I dehydrogenase; part of the gene cluster that mediates the biosynthesis of fungal ergot alkaloid. DmaW catalyzes the first step of ergot alkaloid biosynthesis by condensing dimethylallyl diphosphate (DMAP) and tryptophan to form 4-dimethylallyl-L-tryptophan. The second step is catalyzed by the methyltransferase easF that methylates 4-dimethylallyl-L-tryptophan in the presence of S-adenosyl-L-methionine, resulting in the formation of 4-dimethylallyl-L-abrine. The catalase easC and the FAD-dependent oxidoreductase easE then transform 4-dimethylallyl-L-abrine to chanoclavine-I which is further oxidized by easD in the presence of NAD(+), resulting in the formation of chanoclavine-I aldehyde. Chanoclavine-I aldehyde is the precursor of ergoamides and ergopeptines in Clavicipitaceae, and clavine-type alcaloids such as fumiclavine in Trichocomaceae. However, the metabolites downstream of chanoclavine-I aldehyde in Arthrodermataceae have not been identified yet. This Arthroderma otae (strain ATCC MYA-4605 / CBS 113480) (Microsporum canis) protein is Chanoclavine-I dehydrogenase easD.